The sequence spans 744 residues: 5-methyltetrahydropteroyltriglutamate--homocysteine methyltransferase (744 aa).

5-methyltetrahydropteroyltri-L-glutamate is bound by residues 17–20 (REVK) and Lys-110. Residues 422-424 (IGS) and Glu-475 each bind L-homocysteine. L-methionine-binding positions include 422–424 (IGS) and Glu-475. Trp-552 contributes to the 5-methyltetrahydropteroyltri-L-glutamate binding site. Asp-590 contacts L-homocysteine. Residue Asp-590 participates in L-methionine binding. Residue Glu-596 participates in 5-methyltetrahydropteroyltri-L-glutamate binding. Residues His-632, Cys-634, and Glu-656 each contribute to the Zn(2+) site. His-685 (proton donor) is an active-site residue. Residue Cys-717 participates in Zn(2+) binding.

This sequence belongs to the vitamin-B12 independent methionine synthase family. The cofactor is Zn(2+).

It catalyses the reaction 5-methyltetrahydropteroyltri-L-glutamate + L-homocysteine = tetrahydropteroyltri-L-glutamate + L-methionine. It functions in the pathway amino-acid biosynthesis; L-methionine biosynthesis via de novo pathway; L-methionine from L-homocysteine (MetE route): step 1/1. Functionally, catalyzes the transfer of a methyl group from 5-methyltetrahydrofolate to homocysteine resulting in methionine formation. This Trichodesmium erythraeum (strain IMS101) protein is 5-methyltetrahydropteroyltriglutamate--homocysteine methyltransferase.